Reading from the N-terminus, the 252-residue chain is Biosynthetic peptidoglycan transglycosylase (252 aa).

The chain crosses the membrane as a helical span at residues 23–43 (IGFLLGCIVAGVVAMQVYFFL).

It belongs to the glycosyltransferase 51 family.

The protein resides in the cell inner membrane. The catalysed reaction is [GlcNAc-(1-&gt;4)-Mur2Ac(oyl-L-Ala-gamma-D-Glu-L-Lys-D-Ala-D-Ala)](n)-di-trans,octa-cis-undecaprenyl diphosphate + beta-D-GlcNAc-(1-&gt;4)-Mur2Ac(oyl-L-Ala-gamma-D-Glu-L-Lys-D-Ala-D-Ala)-di-trans,octa-cis-undecaprenyl diphosphate = [GlcNAc-(1-&gt;4)-Mur2Ac(oyl-L-Ala-gamma-D-Glu-L-Lys-D-Ala-D-Ala)](n+1)-di-trans,octa-cis-undecaprenyl diphosphate + di-trans,octa-cis-undecaprenyl diphosphate + H(+). The protein operates within cell wall biogenesis; peptidoglycan biosynthesis. Its function is as follows. Peptidoglycan polymerase that catalyzes glycan chain elongation from lipid-linked precursors. The chain is Biosynthetic peptidoglycan transglycosylase from Cupriavidus pinatubonensis (strain JMP 134 / LMG 1197) (Cupriavidus necator (strain JMP 134)).